The following is a 1391-amino-acid chain: DNA-directed RNA polymerase subunit beta'' (1391 aa).

Residues Cys-220, Cys-291, Cys-298, and Cys-301 each contribute to the Zn(2+) site.

It belongs to the RNA polymerase beta' chain family. RpoC2 subfamily. In plastids the minimal PEP RNA polymerase catalytic core is composed of four subunits: alpha, beta, beta', and beta''. When a (nuclear-encoded) sigma factor is associated with the core the holoenzyme is formed, which can initiate transcription. Zn(2+) is required as a cofactor.

It is found in the plastid. Its subcellular location is the chloroplast. The enzyme catalyses RNA(n) + a ribonucleoside 5'-triphosphate = RNA(n+1) + diphosphate. Its function is as follows. DNA-dependent RNA polymerase catalyzes the transcription of DNA into RNA using the four ribonucleoside triphosphates as substrates. This is DNA-directed RNA polymerase subunit beta'' from Gossypium barbadense (Sea Island cotton).